The sequence spans 790 residues: MPAAPVLRPPPPPATPAPPAPSRPAPPIPGHRGPCDHSLKCLSSKISERKLPGPWLPAGRGPLEKPVLGPRGAVMPLFSPQSSLHSVRAEHSPLKPRVVTVVKLGGQPLRKATLLLNRRSVQTFEQLLSDISEALGFPRWKNDRVRKLFTLKGREVKSVSDFFREGDAFIAMGKEPLTLKSIQLAMEELYPKNRALALAPHSRVPSPRLRSRLPSKLLKGSHRCGEAGSYSAEMESKAVSRHQGKTSTVLAPEDKARAQKWVRGKQESEPGGPPSPGAATQEETHASGEKHLGVEIEKTSGEIVRCEKCKRERELQLGLQREPCPLGTSELDLGRAQKRDSEKLVRTKSCRRPSEAKSTDGEEGWKGDSHRGSPRDPPQELRRPNSNSDKKEIRGSESQDSHPQGAPKAQKDLVEGPPAVEEGPIDMRREDRHTCRSKHAAWLRREQQAEPPQLPRTRGEEKQAEHEKKPGGLGERRAPEKESKRKLEEKRPERPSGRKPRPKGIISADVEKHYDIGGVIGDGNFATVKECRHRETKQAYAMKMIDKSQLKGKEDIVDSEILIIQSLSHPNIVKLHEVYETEAEIYLIMEYVQGGDLFDAIVENVKFPEPEAAVMITDLCKALVHMHDKNIVHRDVKPENLLVQRNEDKSITLKLADFGLAKYVVRPIFTVCGTPTYVAPEILSEKGYGLEVDMWAAGVILYILLCGFPPFRSPERDQDELFNIIQVGQFEFLSPYWDNISDAAKDLVRNLLEVDPKKRYTAEQVLQHPWIEMVGHTNTGNSQKEESPNS.

The tract at residues 1–37 (MPAAPVLRPPPPPATPAPPAPSRPAPPIPGHRGPCDH) is disordered. Residues 7–29 (LRPPPPPATPAPPAPSRPAPPIP) are compositionally biased toward pro residues. In terms of domain architecture, Doublecortin spans 97–183 (RVVTVVKLGG…KEPLTLKSIQ (87 aa)). Low complexity predominate over residues 201 to 218 (HSRVPSPRLRSRLPSKLL). Disordered stretches follow at residues 201-290 (HSRV…SGEK) and 315-506 (LQLG…KGII). 4 stretches are compositionally biased toward basic and acidic residues: residues 332–345 (DLGRAQKRDSEKLV), 352–400 (RPSE…ESQD), 425–434 (IDMRREDRHT), and 457–496 (TRGEEKQAEHEKKPGGLGERRAPEKESKRKLEEKRPERPS). Positions 514–771 (YDIGGVIGDG…AEQVLQHPWI (258 aa)) constitute a Protein kinase domain. ATP contacts are provided by residues 520 to 528 (IGDGNFATV) and lysine 543. Aspartate 635 serves as the catalytic Proton acceptor.

It belongs to the protein kinase superfamily. CAMK Ser/Thr protein kinase family. CaMK subfamily. Highly expressed in brain and to a lower extent in liver and kidney.

Its subcellular location is the cytoplasm. It is found in the nucleus. The catalysed reaction is L-seryl-[protein] + ATP = O-phospho-L-seryl-[protein] + ADP + H(+). The enzyme catalyses L-threonyl-[protein] + ATP = O-phospho-L-threonyl-[protein] + ADP + H(+). The chain is Serine/threonine-protein kinase DCLK3 (Dclk3) from Mus musculus (Mouse).